The following is a 346-amino-acid chain: Senescence-specific cysteine protease SAG12 (346 aa).

The first 25 residues, 1 to 25 (MALKHMQIFLFVAIFSSFCFSITLS), serve as a signal peptide directing secretion. N-linked (GlcNAc...) asparagine glycosylation occurs at N124. 3 disulfides stabilise this stretch: C151–C192, C185–C225, and C283–C335. The active site involves C154. The active site involves H289. N301 is a glycosylation site (N-linked (GlcNAc...) asparagine). Residue N310 is part of the active site.

This sequence belongs to the peptidase C1 family. Found in senescent leaves, especially in senescence-associated vacuoles- (SAVs) containing cells (e.g. mesophyll and guard cells), and in senescencing ovules of unfertilised pistils.

It localises to the vacuole. Functionally, cysteine protease that may have a developmental senescence specific cell death function during apoptosis, heavy metal detoxification, and hypersensitive response. The polypeptide is Senescence-specific cysteine protease SAG12 (Arabidopsis thaliana (Mouse-ear cress)).